Reading from the N-terminus, the 78-residue chain is Large ribosomal subunit protein bL28 (78 aa).

The interval 1–28 (MSAYCQVTGRKPGFGKQVSHSHRHTSRR) is disordered.

This sequence belongs to the bacterial ribosomal protein bL28 family.

In Corynebacterium urealyticum (strain ATCC 43042 / DSM 7109), this protein is Large ribosomal subunit protein bL28.